The following is a 491-amino-acid chain: Glutathione synthetase GSH2 (491 aa).

Substrate is bound at residue R128. E146 is an ATP binding site. Positions 146 and 148 each coordinate Mg(2+). Substrate-binding positions include 150 to 153, 228 to 230, Q234, and 285 to 288; these read VSVS, ERN, and RTGY. Residues K324, 382–391, Y393, 415–418, and E442 each bind ATP; these read KPQREGGGNN and MELI. E386 contacts Mg(2+). R467 is a substrate binding site. The ATP site is built by K469 and E475. 478–479 is a substrate binding site; the sequence is VA.

Belongs to the eukaryotic GSH synthase family. Homodimer. Requires Mg(2+) as cofactor.

It catalyses the reaction gamma-L-glutamyl-L-cysteine + glycine + ATP = glutathione + ADP + phosphate + H(+). It participates in sulfur metabolism; glutathione biosynthesis; glutathione from L-cysteine and L-glutamate: step 2/2. The sequence is that of Glutathione synthetase GSH2 (GSH2) from Saccharomyces cerevisiae (strain ATCC 204508 / S288c) (Baker's yeast).